The primary structure comprises 760 residues: General transcription and DNA repair factor IIH helicase subunit XPD (760 aa).

Positions 7 to 283 (GLLVYFPYDY…KETDEQRLRD (277 aa)) constitute a Helicase ATP-binding domain. 42-49 (MPSGTGKT) contributes to the ATP binding site. The [4Fe-4S] cluster site is built by C116, C134, C155, and C190. The short motif at 234–237 (DEAH) is the DEAH box element. The mediates interaction with MMS19 stretch occupies residues 438-637 (MDASLAIKPV…TQSRILKARL (200 aa)). The short motif at 682 to 695 (KRFARGDKRGKLPR) is the Nuclear localization signal element.

The protein belongs to the helicase family. RAD3/XPD subfamily. As to quaternary structure, component of the 7-subunit TFIIH core complex composed of XPB/ERCC3, XPD/ERCC2, GTF2H1, GTF2H2, GTF2H3, GTF2H4 and GTF2H5, which is active in NER. The core complex associates with the 3-subunit CDK-activating kinase (CAK) module composed of CCNH/cyclin H, CDK7 and MNAT1 to form the 10-subunit holoenzyme (holo-TFIIH) active in transcription. Interacts with GTF2H2 (p44) which stimulates the 5'-3' helicase activity of this subunit. Component of the MMXD complex, which includes CIAO1, ERCC2, CIAO2B, MMS19 and SLC25A5. Interacts with CIAO1 and CIAO2B; the interaction WITH CIAO2B is direct. Interacts with ATF7IP. Interacts directly with MMS19. Part of TBP-based Pol II pre-initiation complex (PIC), in which Pol II core assembles with general transcription factors and other specific initiation factors including GTF2E1, GTF2E2, GTF2F1, GTF2F2, TCEA1, ERCC2, ERCC3, GTF2H2, GTF2H3, GTF2H4, GTF2H5, GTF2A1, GTF2A2, GTF2B and TBP; this large multi-subunit PIC complex mediates DNA unwinding and targets Pol II core to the transcription start site where the first phosphodiester bond forms. In terms of assembly, (Microbial infection) Interacts with Epstein-Barr virus EBNA2. It depends on Mg(2+) as a cofactor. [4Fe-4S] cluster is required as a cofactor. Post-translationally, ISGylated.

It localises to the nucleus. It is found in the cytoplasm. The protein localises to the cytoskeleton. The protein resides in the spindle. It carries out the reaction Couples ATP hydrolysis with the unwinding of duplex DNA at the replication fork by translocating in the 5'-3' direction. This creates two antiparallel DNA single strands (ssDNA). The leading ssDNA polymer is the template for DNA polymerase III holoenzyme which synthesizes a continuous strand.. The catalysed reaction is ATP + H2O = ADP + phosphate + H(+). Interaction with GTF2H2 (p44) results in stimulation of the 5'-3' helicase activity of this subunit. DNA unwinding by this subunit in TFIIH is stimulated 4-fold by XPA and 20-fold by ERCC5/XPG. ATP-dependent 5'-3' DNA helicase. Component of the general transcription and DNA repair factor IIH (TFIIH) core complex, not absolutely essential for minimal transcription in vitro. Required for transcription-coupled nucleotide excision repair (NER) of damaged DNA; recognizes damaged bases. Sequestered in chromatin on UV-damaged DNA. When complexed to CDK-activating kinase (CAK), involved in transcription by RNA polymerase II. In NER, TFIIH acts by opening DNA around the lesion to allow the excision of the damaged oligonucleotide and its replacement by a new DNA fragment. The ATP-dependent helicase activity of XPD/ERCC2 is required for DNA opening. Involved in DNA lesion verification. In transcription, TFIIH has an essential role in transcription initiation. When the pre-initiation complex (PIC) has been established, TFIIH is required for promoter opening and promoter escape. Phosphorylation of the C-terminal tail (CTD) of the largest subunit of RNA polymerase II by the kinase module CAK controls the initiation of transcription. XPD/ERCC2 acts by forming a bridge between CAK and the core-TFIIH complex. The structure of the TFIIH transcription complex differs from the NER-TFIIH complex; large movements by XPD/ERCC2 and XPB/ERCC3 are stabilized by XPA which allow this subunit to contact ssDNA. Involved in the regulation of vitamin-D receptor activity. As part of the mitotic spindle-associated MMXD complex it plays a role in chromosome segregation. Might have a role in aging process and could play a causative role in the generation of skin cancers. This Homo sapiens (Human) protein is General transcription and DNA repair factor IIH helicase subunit XPD (ERCC2).